The chain runs to 888 residues: CRISPR-associated endonuclease/helicase Cas3 (888 aa).

The HD Cas3-type domain occupies Lys20–Leu231. 2 residues coordinate Mg(2+): Asp75 and His160. Residues Asp301–Pro504 form the Helicase ATP-binding domain. Ala314–Thr321 is a binding site for ATP. The DEAH box motif lies at Asp452–His455. The Helicase C-terminal domain occupies Met556–Tyr735.

This sequence in the N-terminal section; belongs to the CRISPR-associated nuclease Cas3-HD family. The protein in the central section; belongs to the CRISPR-associated helicase Cas3 family. Interacts with the CasA subunit of Cascade once Cascade has recognized target DNA. It depends on Mg(2+) as a cofactor.

In terms of biological role, CRISPR (clustered regularly interspaced short palindromic repeat), is an adaptive immune system that provides protection against mobile genetic elements (viruses, transposable elements and conjugative plasmids). CRISPR clusters contain sequences complementary to antecedent mobile elements and target invading nucleic acids. CRISPR clusters are transcribed and processed into CRISPR RNA (crRNA). Cas3 plus Cascade participate in CRISPR interference, the third stage of CRISPR immunity. Acts as an endonuclease, a 3'-5'exonuclease, and an ATP-dependent dsDNA helicase. Anneals and unwinds R-loops (in which crRNA binds the target DNA, displacing the noncomplementary strand). Unwinding requires ATP, annealing does not. Required along with the Cascade complex for resistance to bacteriophage lambda infection as well as the ability to cure CRISPR-encoding high-copy number plasmid. A Cas3-CasA fusion protein purified with the Cascade complex nicks target plasmid in the presence but not absence of Mg(2+), and degrades plasmid fully in the presence of Mg(2+) and ATP, suggesting the helicase activity is required for complete degradation. The sequence is that of CRISPR-associated endonuclease/helicase Cas3 (ygcB) from Escherichia coli (strain K12).